Consider the following 1434-residue polypeptide: Probable ATP-dependent RNA helicase spindle-E (1434 aa).

Residues 125–292 (LAAINAHPVI…FATTNSIPPV (168 aa)) form the Helicase ATP-binding domain. 138-145 (GETGCGKT) is a binding site for ATP. Residues 238-241 (DEVH) carry the DEAH box motif. The region spanning 339-526 (KIIVIIDNME…NSVLKAKVLN (188 aa)) is the Helicase C-terminal domain. Residues 938-1001 (AGDITKGMMV…RLMPRELTEQ (64 aa)) form the Tudor domain.

Belongs to the DEAD box helicase family. DEAH subfamily.

The protein resides in the cytoplasm. The enzyme catalyses ATP + H2O = ADP + phosphate + H(+). Its function is as follows. Probable ATP-binding RNA helicase which plays a central role during spermatogenesis and oogenesis by repressing transposable elements and preventing their mobilization, which is essential for the germline integrity. Acts via the piRNA metabolic process, which mediates the repression of transposable elements during meiosis by forming complexes composed of piRNAs and Piwi and govern the methylation and subsequent repression of transposons. Involved in the repression of LTR retrotransposon copia. Also involved in telomere regulation by repressing specialized telomeric retroelements HeT-A, TAHRE, and TART; Drosophila telomeres being maintained by transposition of specialized telomeric retroelements. Involved in telomeric trans-silencing, a repression mechanism by which a transposon or a transgene inserted in subtelomeric heterochromatin has the capacity to repress in trans in the female germline, a homologous transposon, or transgene located in euchromatin. Involved in the repression of testis-expressed Stellate genes by the homologous Su(Ste) repeats. Required for anteroposterior and dorsoventral axis formation during oogenesis. This Drosophila sechellia (Fruit fly) protein is Probable ATP-dependent RNA helicase spindle-E (spn-E).